A 39-amino-acid polypeptide reads, in one-letter code: MEFATNRVTVNDSRSALSSTLLLSLIMSATLLEYSLSMT.

Residues 15–37 (SALSSTLLLSLIMSATLLEYSLS) traverse the membrane as a helical segment.

Its subcellular location is the cell inner membrane. Its function is as follows. Required for microcin H47 production. Possibly involved in a regulatory loop modulating its own expression and that of MchI and MchB. The sequence is that of Protein MchX (mchX) from Escherichia coli.